The sequence spans 457 residues: Cysteine--tRNA ligase (457 aa).

Zn(2+) is bound at residue cysteine 29. A 'HIGH' region motif is present at residues 31–41; the sequence is PTVYDNPHIGN. Zn(2+) contacts are provided by cysteine 214, histidine 239, and glutamate 243. The 'KMSKS' region motif lies at 272–276; that stretch reads KMSKS. Lysine 275 lines the ATP pocket.

Belongs to the class-I aminoacyl-tRNA synthetase family. Monomer. Requires Zn(2+) as cofactor.

It is found in the cytoplasm. The enzyme catalyses tRNA(Cys) + L-cysteine + ATP = L-cysteinyl-tRNA(Cys) + AMP + diphosphate. This is Cysteine--tRNA ligase (cysS) from Rickettsia prowazekii (strain Madrid E).